Consider the following 473-residue polypeptide: Knob-associated histidine-rich protein (473 aa).

The N-terminal stretch at 1–34 (MKSFKNKNTLRRKKAFPVFTKILLVSFLVWVLKC) is a signal peptide. The N-linked (GlcNAc...) asparagine glycan is linked to Asn-42. The segment covering 57–87 (AQKQHEHHHHHHHQHQHQHQAPHQAHHHHHH) has biased composition (basic residues). 2 disordered regions span residues 57-143 (AQKQ…QVFR) and 347-473 (SSVN…DGSK). Low complexity predominate over residues 95 to 104 (PQVHQQVHGQ). Positions 108-117 (HHHHHHHHHQ) are enriched in basic residues. 2 stretches are compositionally biased toward basic and acidic residues: residues 354 to 375 (KHGD…EGEK) and 396 to 405 (KDNEDAESVK). Over residues 406–422 (SKKHKSHDCEKKKSKKH) the composition is skewed to basic residues. 2 stretches are compositionally biased toward basic and acidic residues: residues 423-444 (KDNE…GEKH) and 453-473 (KTNE…DGSK).

The protein resides in the secreted. Its function is as follows. KAHRP might mimick human histidine-rich glycoproteins to anchor host thrombospondin or a parasite analog in a binding complex with the endothelial cell receptor. This is Knob-associated histidine-rich protein from Plasmodium falciparum.